The primary structure comprises 508 residues: MSGLCACTLVGAAQVQQLEAALFAAGMPVEALMEKAGLRLAAAIAADYPAGGYPRVGVLVGPGHNGGDALVVARELWLVGRSVQVFCPRPPIKPLARAHLDYFQSLGGRVHTGAVPEEPGVDLWVDGLFGFGLERPVAEPYAGLMAQVNASGVPVAAVDLPSGLSSETGEALGGLAVRAARTYCLGLWKRGLWQDAALDWLGVPVRLEIGFSEAQVRSVLGEDHRSARLLLPDAARAGLPLARPATAHKYSVGTLLAVAGSRQYGGAATLVALGARSGGPGMLYLALPESLADRVAARLPEAIVHPCPQAENGALADLPGVDLEKFDAVVCGPGLGKAEQALVLRLAREAAGALVLDADGLNLIAGQLEVLAQRAAPTVLTPHPGEFKRLFPDIALADRQGAARTAALRSHAWIVLKGARTVVASPSGQVWVNPGGSPALARGGSGDVLAGLLGALLAQCENPEPAVLGAVWWHAAAGEWLAARHTVLGVDAETLALGLLPFLAADGP.

The interval 1–224 is NAD(P)H-hydrate epimerase; the sequence is MSGLCACTLV…QVRSVLGEDH (224 aa). In terms of domain architecture, YjeF N-terminal spans 15 to 217; sequence VQQLEAALFA…EIGFSEAQVR (203 aa). An NADPHX 1; for epimerase activity region spans residues 64–68; the sequence is HNGGD. K(+) is bound by residues Asn-65 and Asp-126. Positions 130 to 136 are NADPHX 1; for epimerase activity; sequence GFGLERP. The (6S)-NADPHX site is built by Tyr-141 and Asp-159. Position 162 (Ser-162) interacts with K(+). The 275-residue stretch at 232-506 folds into the YjeF C-terminal domain; that stretch reads PDAARAGLPL…LGLLPFLAAD (275 aa). Residues 232–508 are ADP-dependent (S)-NAD(P)H-hydrate dehydratase; it reads PDAARAGLPL…LLPFLAADGP (277 aa). Residue Gly-334 coordinates (6S)-NADPHX. The segment at 383 to 389 is NADPHX 2; for dehydratase activity; that stretch reads HPGEFKR. ADP contacts are provided by residues 417–421 and 437–446; these read KGART and SPALARGGSG. Residue Asp-447 coordinates (6S)-NADPHX.

In the N-terminal section; belongs to the NnrE/AIBP family. The protein in the C-terminal section; belongs to the NnrD/CARKD family. K(+) is required as a cofactor.

It carries out the reaction (6S)-NADHX + ADP = AMP + phosphate + NADH + H(+). The catalysed reaction is (6S)-NADPHX + ADP = AMP + phosphate + NADPH + H(+). It catalyses the reaction (6R)-NADHX = (6S)-NADHX. The enzyme catalyses (6R)-NADPHX = (6S)-NADPHX. Functionally, bifunctional enzyme that catalyzes the epimerization of the S- and R-forms of NAD(P)HX and the dehydration of the S-form of NAD(P)HX at the expense of ADP, which is converted to AMP. This allows the repair of both epimers of NAD(P)HX, a damaged form of NAD(P)H that is a result of enzymatic or heat-dependent hydration. This chain is Bifunctional NAD(P)H-hydrate repair enzyme Nnr (nnr), found in Gloeobacter violaceus (strain ATCC 29082 / PCC 7421).